The following is a 358-amino-acid chain: Type II restriction enzyme HpaII (358 aa).

As to quaternary structure, homodimer.

The catalysed reaction is Endonucleolytic cleavage of DNA to give specific double-stranded fragments with terminal 5'-phosphates.. An E and P subtype restriction enzyme that recognizes the double-stranded sequence 5'-CCGG-3' and cleaves after C-1. This is Type II restriction enzyme HpaII from Haemophilus parainfluenzae.